Reading from the N-terminus, the 857-residue chain is Alanine--tRNA ligase (857 aa).

Zn(2+) is bound by residues histidine 556, histidine 560, cysteine 658, and histidine 662.

The protein belongs to the class-II aminoacyl-tRNA synthetase family. The cofactor is Zn(2+).

It localises to the cytoplasm. The catalysed reaction is tRNA(Ala) + L-alanine + ATP = L-alanyl-tRNA(Ala) + AMP + diphosphate. Functionally, catalyzes the attachment of alanine to tRNA(Ala) in a two-step reaction: alanine is first activated by ATP to form Ala-AMP and then transferred to the acceptor end of tRNA(Ala). Also edits incorrectly charged Ser-tRNA(Ala) and Gly-tRNA(Ala) via its editing domain. This chain is Alanine--tRNA ligase, found in Sulfurovum sp. (strain NBC37-1).